The following is a 137-amino-acid chain: Large ribosomal subunit protein uL16 (137 aa).

The span at 1 to 17 (MLSPKRVKFRKRQRGRL) shows a compositional bias: basic residues. A disordered region spans residues 1-24 (MLSPKRVKFRKRQRGRLKGTDERG).

It belongs to the universal ribosomal protein uL16 family. In terms of assembly, part of the 50S ribosomal subunit.

Binds 23S rRNA and is also seen to make contacts with the A and possibly P site tRNAs. This Leptospira borgpetersenii serovar Hardjo-bovis (strain JB197) protein is Large ribosomal subunit protein uL16.